A 93-amino-acid polypeptide reads, in one-letter code: UPF0728 protein C10orf53 homolog (93 aa).

This sequence belongs to the UPF0728 family.

The protein is UPF0728 protein C10orf53 homolog of Bos taurus (Bovine).